The sequence spans 417 residues: Lipoyl synthase, mitochondrial (417 aa).

The transit peptide at 1–26 directs the protein to the mitochondrion; it reads MAVCARGLRCLGTPAVSLRLAASRSY. Residues 27–61 form a disordered region; that stretch reads ATTTPPDPAIPNTPGAAATSSPAKRPRTSFQDKLN. Residues 44-58 are compositionally biased toward polar residues; it reads ATSSPAKRPRTSFQD. 7 residues coordinate [4Fe-4S] cluster: C134, C139, C145, C165, C169, C172, and S380. The Radical SAM core domain maps to 148–369; sequence GGSKSAATAT…KEKALEMGFL (222 aa). The disordered stretch occupies residues 398-417; sequence ESTGPGSASVQDVATGDLVR.

The protein belongs to the radical SAM superfamily. Lipoyl synthase family. [4Fe-4S] cluster serves as cofactor.

The protein localises to the mitochondrion. The enzyme catalyses [[Fe-S] cluster scaffold protein carrying a second [4Fe-4S](2+) cluster] + N(6)-octanoyl-L-lysyl-[protein] + 2 oxidized [2Fe-2S]-[ferredoxin] + 2 S-adenosyl-L-methionine + 4 H(+) = [[Fe-S] cluster scaffold protein] + N(6)-[(R)-dihydrolipoyl]-L-lysyl-[protein] + 4 Fe(3+) + 2 hydrogen sulfide + 2 5'-deoxyadenosine + 2 L-methionine + 2 reduced [2Fe-2S]-[ferredoxin]. Its pathway is protein modification; protein lipoylation via endogenous pathway; protein N(6)-(lipoyl)lysine from octanoyl-[acyl-carrier-protein]: step 2/2. Catalyzes the radical-mediated insertion of two sulfur atoms into the C-6 and C-8 positions of the octanoyl moiety bound to the lipoyl domains of lipoate-dependent enzymes, thereby converting the octanoylated domains into lipoylated derivatives. This is Lipoyl synthase, mitochondrial from Uncinocarpus reesii (strain UAMH 1704).